We begin with the raw amino-acid sequence, 255 residues long: MSNSESVPHVDPGAAPYGNFPNYYSFNPPENRISLLPAELLHKLFRKPAESDSSTQPLLGLDVGCNTGDLSVALYNHLTEPHSKSSDVPVHFLCCDIDPDLITRARASNPFPDFISYATLDIMDSSAVRGPVNDFLQQFARSTFDIAFCMSVTMWIHLNYGDQGLVTFLGHLANLCDYLLVEPQPWKCYRSAARRLRKLGRQDFDHFHSLSIRGDMAENITQILTAEGAAKLIHIFGNTSWDRSLLLFKIQRHPC.

S-adenosyl-L-methionine contacts are provided by residues Arg-32, Asn-66, Asp-96, 121–122, and Met-150; that span reads DI. One can recognise a Bin3-type SAM domain in the interval 41–253; that stretch reads LHKLFRKPAE…SLLLFKIQRH (213 aa).

The protein belongs to the methyltransferase superfamily.

The protein localises to the cytoplasm. It catalyses the reaction a 5'-end 5'-phospho-ribonucleoside-RNA + S-adenosyl-L-methionine = a 5'-end (5'-methylphospho)-ribonucleoside-RNA + S-adenosyl-L-homocysteine. It carries out the reaction a 5'-end 5'-phospho-ribonucleoside-RNA + 2 S-adenosyl-L-methionine = a 5'-end (5'-bismethylphospho)-ribonucleoside-RNA + 2 S-adenosyl-L-homocysteine. Functionally, O-methyltransferase that specifically monomethylates 5'-monophosphate of cytoplasmic histidyl tRNA (tRNA(His)), acting as a capping enzyme by protecting tRNA(His) from cleavage by DICER1. Also able, with less efficiently, to methylate the 5' monophosphate of a subset of pre-miRNAs, acting as a negative regulator of miRNA processing. The 5' monophosphate of pre-miRNAs is recognized by DICER1 and is required for pre-miRNAs processing: methylation at this position reduces the processing of pre-miRNAs by DICER1. Was also reported to mediate dimethylation of pre-miR-145; however dimethylation cannot be reproduced by another group which observes a monomethylation of pre-miR-145. In Xenopus laevis (African clawed frog), this protein is Pre-miRNA 5'-monophosphate methyltransferase (bcdin3d).